Reading from the N-terminus, the 1015-residue chain is Fibronectin-binding protein A (1015 aa).

Positions 1–36 (MKNNLRYGIRKHKLGAASVFLGTMIVVGMGQDKEAA) are cleaved as a signal peptide. The YSIRK-G/S signaling motif signature appears at 7-18 (YGIRKHKLGAAS). A ligand-binding A region region spans residues 37–512 (ASEQKTTTVE…SNKADGNGKN (476 aa)). The segment covering 75-92 (SYSATATEQPSNATQVTT) has biased composition (polar residues). Residues 75–199 (SYSATATEQP…KVETGTDVTS (125 aa)) are disordered. Residues 112–126 (TVKEEVVKEEAKPQV) are compositionally biased toward basic and acidic residues. Over residues 129–139 (TTQSQDNSGDQ) the composition is skewed to polar residues. Residues 179–193 (DVVEAKEASDEKVET) show a composition bias toward basic and acidic residues. A fibrinogen/elastin/tropoelastin-binding region spans residues 194–512 (GTDVTSKVTV…SNKADGNGKN (319 aa)). The interval 513 to 873 (GQIIQNNDFE…EGQQTIEEDT (361 aa)) is fibronectin-binding. The stretch at 546-575 (ENQDNTPLDIDYHTAIDGEGGYVDGYIETI) is one B-1 repeat. The interval 546 to 605 (ENQDNTPLDIDYHTAIDGEGGYVDGYIETIEETDSSAIDIDYHTAVDSEAGHVGGYTESS) is 2 X approximate tandem repeats. One copy of the B-2 repeat lies at 576 to 605 (EETDSSAIDIDYHTAVDSEAGHVGGYTESS). 4 disordered regions span residues 596 to 623 (GHVG…NSKH), 741 to 815 (LGYE…IDFD), 828 to 953 (EIIE…GKVV), and 966 to 992 (VAPT…NKGM). The stretch at 746–783 (GQNSGNQSFEEDTEEDKPKYEQGGNIVDIDFDSVPQIQ) is one D-1 repeat. The 4 X approximate tandem repeats stretch occupies residues 746-875 (GQNSGNQSFE…QQTIEEDTTP (130 aa)). Polar residues predominate over residues 780–791 (PQIQGQNNGNQS). One copy of the D-2 repeat lies at 784-821 (GQNNGNQSFEEDTEKDKPKYEQGGNIIDIDFDSVPQIH). Residues 822–860 (GFNKHTEIIEEDTNKDKPNYQFGGHNSVDFEEDTLPKVS) form a D-3 repeat. The span at 828–839 (EIIEEDTNKDKP) shows a compositional bias: basic and acidic residues. The D-4; truncated repeat unit spans residues 861-875 (GQNEGQQTIEEDTTP). Residues 875–935 (PPTPPTPEVP…PAEPGKPVPP (61 aa)) show a composition bias toward pro residues. WR repeat units follow at residues 876 to 889 (PTPP…EPET), 890 to 903 (PTPP…EPET), 904 to 917 (PTPP…EPET), 918 to 931 (PTPP…EPGK), and 932 to 945 (PVPP…KPSK). The interval 876–945 (PTPPTPEVPS…AKEEPKKPSK (70 aa)) is 5 X tandem repeats, Pro-rich (WR). The short motif at 979–983 (LPETG) is the LPXTG sorting signal element. T982 carries the post-translational modification Pentaglycyl murein peptidoglycan amidated threonine. Positions 983–1015 (GGEESTNKGMLFGGLFSILGLALLRRNKKNNKA) are cleaved as a propeptide — removed by sortase.

Its subcellular location is the secreted. The protein localises to the cell wall. In terms of biological role, promotes bacterial attachment to multiple substrates, such as fibronectin (Fn), fibrinogen (Fg), elastin peptides and tropoelastin. This confers to S.aureus the ability to invade endothelial cells. Promotes adherence to and aggregation of activated platelets. This is Fibronectin-binding protein A (fnbA) from Staphylococcus aureus (strain MSSA476).